Here is an 88-residue protein sequence, read N- to C-terminus: Phosphocarrier protein HPr (88 aa).

An HPr domain is found at 1–88 (MAEKTFKVVS…DTLAKEGLAE (88 aa)). Ser-12 carries the post-translational modification Phosphoserine. Catalysis depends on His-15, which acts as the Pros-phosphohistidine intermediate. At Ser-46 the chain carries Phosphoserine; by HPrK/P.

This sequence belongs to the HPr family.

The protein resides in the cytoplasm. Phosphorylation on Ser-46 inhibits the phosphoryl transfer from enzyme I to HPr. Its function is as follows. General (non sugar-specific) component of the phosphoenolpyruvate-dependent sugar phosphotransferase system (sugar PTS). This major carbohydrate active-transport system catalyzes the phosphorylation of incoming sugar substrates concomitantly with their translocation across the cell membrane. The phosphoryl group from phosphoenolpyruvate (PEP) is transferred to the phosphoryl carrier protein HPr by enzyme I. Phospho-HPr then transfers it to the PTS EIIA domain. Functionally, P-Ser-HPr interacts with the catabolite control protein A (CcpA), forming a complex that binds to DNA at the catabolite response elements cre, operator sites preceding a large number of catabolite-regulated genes. Thus, P-Ser-HPr is a corepressor in carbon catabolite repression (CCR), a mechanism that allows bacteria to coordinate and optimize the utilization of available carbon sources. P-Ser-HPr also plays a role in inducer exclusion, in which it probably interacts with several non-PTS permeases and inhibits their transport activity. This chain is Phosphocarrier protein HPr (ptsH), found in Geobacillus stearothermophilus (Bacillus stearothermophilus).